Consider the following 1030-residue polypeptide: Semaphorin-6A (1030 aa).

Positions methionine 1–alanine 18 are cleaved as a signal peptide. At glycine 19–threonine 649 the chain is on the extracellular side. The region spanning serine 24 to leucine 512 is the Sema domain. Residues asparagine 33, asparagine 49, and asparagine 65 are each glycosylated (N-linked (GlcNAc...) asparagine). 4 disulfides stabilise this stretch: cysteine 107/cysteine 117, cysteine 135/cysteine 144, cysteine 258/cysteine 369, and cysteine 283/cysteine 328. Asparagine 282 carries an N-linked (GlcNAc...) asparagine glycan. Asparagine 434 and asparagine 461 each carry an N-linked (GlcNAc...) asparagine glycan. 4 cysteine pairs are disulfide-bonded: cysteine 477–cysteine 506, cysteine 515–cysteine 533, cysteine 521–cysteine 568, and cysteine 525–cysteine 542. The chain crosses the membrane as a helical span at residues leucine 650 to valine 670. At tyrosine 671–threonine 1030 the chain is on the cytoplasmic side. Serine 698 bears the Phosphoserine mark. Disordered stretches follow at residues alanine 754 to glutamate 778, serine 860 to glutamine 897, and tyrosine 912 to threonine 1030. Over residues tyrosine 920–arginine 936 the composition is skewed to polar residues. Low complexity predominate over residues asparagine 937 to serine 952. A Phosphoserine modification is found at serine 952. 2 stretches are compositionally biased toward polar residues: residues glutamine 970–arginine 997 and proline 1018–threonine 1030.

Belongs to the semaphorin family. As to quaternary structure, active as a homodimer or oligomer. The SEMA6A homodimer interacts with a PLXNA2 homodimer, giving rise to a heterotetramer. Interacts with EVL. (Microbial infection) Interacts with P.sordellii toxin TcsL; semaphorins SEMA6A and SEMA6B constitute the major host receptors for TcsL in the vascular endothelium.

The protein resides in the cell membrane. Its function is as follows. Cell surface receptor for PLXNA2 that plays an important role in cell-cell signaling. Required for normal granule cell migration in the developing cerebellum. Promotes reorganization of the actin cytoskeleton and plays an important role in axon guidance in the developing central nervous system. Can act as repulsive axon guidance cue. Has repulsive action towards migrating granular neurons. May play a role in channeling sympathetic axons into the sympathetic chains and controlling the temporal sequence of sympathetic target innervation. (Microbial infection) Acts as a receptor for P.sordellii toxin TcsL in the in the vascular endothelium. This Homo sapiens (Human) protein is Semaphorin-6A (SEMA6A).